Here is a 132-residue protein sequence, read N- to C-terminus: Histone H2A (132 aa).

A compositionally biased stretch (basic residues) spans 1 to 13 (MSAKGKTGRKKAS). The tract at residues 1 to 21 (MSAKGKTGRKKASKGTSNSAK) is disordered.

This sequence belongs to the histone H2A family. In terms of assembly, the nucleosome is a histone octamer containing two molecules each of H2A, H2B, H3 and H4 assembled in one H3-H4 heterotetramer and two H2A-H2B heterodimers. The octamer wraps approximately 147 bp of DNA.

It localises to the nucleus. It is found in the chromosome. In terms of biological role, core component of nucleosome. Nucleosomes wrap and compact DNA into chromatin, limiting DNA accessibility to the cellular machineries which require DNA as a template. Histones thereby play a central role in transcription regulation, DNA repair, DNA replication and chromosomal stability. DNA accessibility is regulated via a complex set of post-translational modifications of histones, also called histone code, and nucleosome remodeling. The chain is Histone H2A from Plasmodium falciparum.